The following is a 393-amino-acid chain: tRNA (guanine-N(7)-)-methyltransferase (393 aa).

Residues glutamate 124, glutamate 149, and aspartate 176 each coordinate S-adenosyl-L-methionine. Aspartate 232 serves as a coordination point for substrate.

The protein belongs to the class I-like SAM-binding methyltransferase superfamily. TrmB family.

It catalyses the reaction guanosine(46) in tRNA + S-adenosyl-L-methionine = N(7)-methylguanosine(46) in tRNA + S-adenosyl-L-homocysteine. The protein operates within tRNA modification; N(7)-methylguanine-tRNA biosynthesis. In terms of biological role, catalyzes the formation of N(7)-methylguanine at position 46 (m7G46) in tRNA. In Helicobacter pylori (strain HPAG1), this protein is tRNA (guanine-N(7)-)-methyltransferase.